A 262-amino-acid chain; its full sequence is Leucine-rich repeat-containing protein 18 (262 aa).

7 LRR repeats span residues 28–49 (GRKR…ILRL), 51–72 (DIDE…IAKF), 74–95 (NLRW…IGQM), 97–118 (SLLF…VELN), 122–144 (NIRT…GALK), 145–167 (ELHE…AKLP), and 168–189 (KLKK…EMFV).

In terms of tissue distribution, exclusively expressed in spermatocytes and roud spermatids within seminiferous tubules during spermatogenesis.

Its subcellular location is the cytoplasm. In terms of biological role, may be involved in the regulation of spermatogenesis and sperm maturation. This Mus musculus (Mouse) protein is Leucine-rich repeat-containing protein 18 (Lrrc18).